Consider the following 151-residue polypeptide: Ubiquitin-conjugating enzyme E2 W (151 aa).

A UBC core domain is found at 3 to 151 (SMQKRLQKEL…TKWWYHDDTC (149 aa)). The Glycyl thioester intermediate role is filled by cysteine 91.

The protein belongs to the ubiquitin-conjugating enzyme family.

The protein localises to the nucleus. It catalyses the reaction S-ubiquitinyl-[E1 ubiquitin-activating enzyme]-L-cysteine + [E2 ubiquitin-conjugating enzyme]-L-cysteine = [E1 ubiquitin-activating enzyme]-L-cysteine + S-ubiquitinyl-[E2 ubiquitin-conjugating enzyme]-L-cysteine.. The enzyme catalyses S-ubiquitinyl-[E1 ubiquitin-activating enzyme]-L-cysteine + [acceptor protein]-N-terminal-amino acid = [E1 ubiquitin-activating enzyme]-L-cysteine + N-terminal-ubiquitinyl-[acceptor protein].. It functions in the pathway protein modification; protein ubiquitination. Its function is as follows. Accepts ubiquitin from the E1 complex and catalyzes its covalent attachment to other proteins. Catalyzes monoubiquitination. Involved in degradation of misfolded chaperone substrate and DNA repair. This chain is Ubiquitin-conjugating enzyme E2 W (ube2w), found in Xenopus tropicalis (Western clawed frog).